Consider the following 501-residue polypeptide: Postreplication repair E3 ubiquitin-protein ligase rad18 (501 aa).

The segment at 34 to 72 adopts an RING-type zinc-finger fold; it reads CHVCKDFYDSPMLTSCNHTFCSLCIRRCLSVDSKCPLCR. The segment at 111–154 is disordered; that stretch reads QAILPDQAGPSSPSKRKATEMEGPKEEDPESKRPRRSTRSTRAR. Basic and acidic residues predominate over residues 127-142; it reads KATEMEGPKEEDPESK. A compositionally biased stretch (basic residues) spans 143–152; it reads RPRRSTRSTR. A UBZ4-type zinc finger spans residues 186-214; sequence LVACPICLTRMKEQQVDRHLDTSCPGSPQ. Zn(2+) is bound by residues C189, C192, H204, and C209. Residues 203-250 are disordered; it reads RHLDTSCPGSPQAASKRRPIPAQTPQPSTFPSFNTRLTSQTNQKPPER. The span at 225-246 shows a compositional bias: polar residues; it reads QTPQPSTFPSFNTRLTSQTNQK. Positions 256-290 constitute an SAP domain; sequence YSMLRDTALRKKLSELGLSTHGSRQLLEKRHKEWI. The disordered stretch occupies residues 377–501; it reads IKRQTLDGNG…GMKKPNPETC (125 aa).

This sequence belongs to the RAD18 family. In terms of assembly, interacts with E2 mus-8/ubc2, forming a complex with ubiquitin ligase activity.

It is found in the nucleus. It catalyses the reaction S-ubiquitinyl-[E2 ubiquitin-conjugating enzyme]-L-cysteine + [acceptor protein]-L-lysine = [E2 ubiquitin-conjugating enzyme]-L-cysteine + N(6)-ubiquitinyl-[acceptor protein]-L-lysine.. It participates in protein modification; protein ubiquitination. Functionally, E3 RING-finger protein, member of the UBC2/RAD6 epistasis group. Associates to the E2 ubiquitin conjugating enzyme mus-8/ubc2 to form the mus-8/ubc2-uvs-2/rad18 ubiquitin ligase complex involved in postreplicative repair (PRR) of damaged DNA. This chain is Postreplication repair E3 ubiquitin-protein ligase rad18 (uvs-2), found in Neurospora crassa (strain ATCC 24698 / 74-OR23-1A / CBS 708.71 / DSM 1257 / FGSC 987).